The following is a 295-amino-acid chain: Indole-3-glycerol phosphate synthase (295 aa).

The protein belongs to the TrpC family.

The enzyme catalyses 1-(2-carboxyphenylamino)-1-deoxy-D-ribulose 5-phosphate + H(+) = (1S,2R)-1-C-(indol-3-yl)glycerol 3-phosphate + CO2 + H2O. It participates in amino-acid biosynthesis; L-tryptophan biosynthesis; L-tryptophan from chorismate: step 4/5. The sequence is that of Indole-3-glycerol phosphate synthase from Prochlorococcus marinus (strain NATL1A).